The following is an 84-amino-acid chain: Small ribosomal subunit protein bS16 (84 aa).

This sequence belongs to the bacterial ribosomal protein bS16 family.

In Dechloromonas aromatica (strain RCB), this protein is Small ribosomal subunit protein bS16.